A 216-amino-acid chain; its full sequence is Somatotropin (216 aa).

A signal peptide spans 1–26; the sequence is MATGSQTSWLLTFTLLCLPWPQEAGA. H45 provides a ligand contact to Zn(2+). C78 and C189 are oxidised to a cystine. S131 bears the Phosphoserine mark. E198 is a Zn(2+) binding site. A disulfide bridge connects residues C206 and C214.

It belongs to the somatotropin/prolactin family.

The protein localises to the secreted. Plays an important role in growth control. Its major role in stimulating body growth is to stimulate the liver and other tissues to secrete IGF1. It stimulates both the differentiation and proliferation of myoblasts. It also stimulates amino acid uptake and protein synthesis in muscle and other tissues. The sequence is that of Somatotropin (GH1) from Spalax ehrenbergi (Middle East blind mole rat).